The primary structure comprises 298 residues: Inosose dehydratase (298 aa).

The protein belongs to the IolE/MocC family. Glutathione is required as a cofactor. It depends on Co(2+) as a cofactor. The cofactor is Mn(2+).

It catalyses the reaction scyllo-inosose = 3D-3,5/4-trihydroxycyclohexane-1,2-dione + H2O. Its function is as follows. Catalyzes the dehydration of inosose (2-keto-myo-inositol, 2KMI or 2,4,6/3,5-pentahydroxycyclohexanone) to 3D-(3,5/4)-trihydroxycyclohexane-1,2-dione (D-2,3-diketo-4-deoxy-epi-inositol). This chain is Inosose dehydratase, found in Erwinia tasmaniensis (strain DSM 17950 / CFBP 7177 / CIP 109463 / NCPPB 4357 / Et1/99).